We begin with the raw amino-acid sequence, 160 residues long: Phosphopantetheine adenylyltransferase (160 aa).

Serine 9 is a substrate binding site. ATP contacts are provided by residues serine 9–phenylalanine 10 and histidine 17. Substrate contacts are provided by lysine 41, valine 73, and lysine 87. Residues glycine 88–arginine 90, glutamate 98, and tyrosine 122–serine 128 each bind ATP.

The protein belongs to the bacterial CoaD family. Homohexamer. The cofactor is Mg(2+).

It is found in the cytoplasm. It carries out the reaction (R)-4'-phosphopantetheine + ATP + H(+) = 3'-dephospho-CoA + diphosphate. It functions in the pathway cofactor biosynthesis; coenzyme A biosynthesis; CoA from (R)-pantothenate: step 4/5. Its function is as follows. Reversibly transfers an adenylyl group from ATP to 4'-phosphopantetheine, yielding dephospho-CoA (dPCoA) and pyrophosphate. The protein is Phosphopantetheine adenylyltransferase of Mycobacterium avium (strain 104).